The following is a 613-amino-acid chain: Probable LRR receptor-like serine/threonine-protein kinase At5g10290 (613 aa).

Positions 1 to 31 (MRMFSLQKMAMAFTLLFFACLCSFVSPDAQG) are cleaved as a signal peptide. Over 32–225 (DALFALRISL…SGDSSKPKTG (194 aa)) the chain is Extracellular. N-linked (GlcNAc...) asparagine glycosylation is found at asparagine 81 and asparagine 116. LRR repeat units lie at residues 95-117 (NLKT…FGNL), 119-141 (SLTS…IGNL), 143-166 (KLQF…TGLP), and 167-189 (NLLN…LFEI). A glycan (N-linked (GlcNAc...) asparagine) is linked at asparagine 155. Asparagine 193 is a glycosylation site (N-linked (GlcNAc...) asparagine). Residues 226–246 (IIAGVVAGVTVVLFGILLFLF) traverse the membrane as a helical segment. Residues 247-613 (CKDRHKGYRR…QDAIELSGGR (367 aa)) are Cytoplasmic-facing. The residue at position 287 (threonine 287) is a Phosphothreonine. One can recognise a Protein kinase domain in the interval 290 to 569 (FSEKNVLGQG…VVRMLEGEGL (280 aa)). ATP is bound at residue 296–304 (LGQGGFGKV). Threonine 313 carries the phosphothreonine modification. Lysine 318 provides a ligand contact to ATP. The residue at position 371 (serine 371) is a Phosphoserine. Position 390 is a phosphothreonine (threonine 390). The active-site Proton acceptor is aspartate 417. 3 positions are modified to phosphothreonine: threonine 450, threonine 451, and threonine 456. The residue at position 464 (tyrosine 464) is a Phosphotyrosine. The residue at position 466 (serine 466) is a Phosphoserine. The residue at position 467 (threonine 467) is a Phosphothreonine. Position 471 is a phosphoserine (serine 471). The residue at position 547 (threonine 547) is a Phosphothreonine.

The protein belongs to the protein kinase superfamily. Ser/Thr protein kinase family.

Its subcellular location is the cell membrane. The enzyme catalyses L-seryl-[protein] + ATP = O-phospho-L-seryl-[protein] + ADP + H(+). The catalysed reaction is L-threonyl-[protein] + ATP = O-phospho-L-threonyl-[protein] + ADP + H(+). This chain is Probable LRR receptor-like serine/threonine-protein kinase At5g10290, found in Arabidopsis thaliana (Mouse-ear cress).